The following is a 221-amino-acid chain: Translation initiation factor 6 (221 aa).

The protein belongs to the eIF-6 family.

Its function is as follows. Binds to the 50S ribosomal subunit and prevents its association with the 30S ribosomal subunit to form the 70S initiation complex. This chain is Translation initiation factor 6, found in Methanopyrus kandleri (strain AV19 / DSM 6324 / JCM 9639 / NBRC 100938).